We begin with the raw amino-acid sequence, 92 residues long: DNA-binding protein HU-alpha (92 aa).

This sequence belongs to the bacterial histone-like protein family. In terms of assembly, heterodimer of an alpha and a beta chain.

In terms of biological role, histone-like DNA-binding protein which is capable of wrapping DNA to stabilize it, and thus to prevent its denaturation under extreme environmental conditions. This chain is DNA-binding protein HU-alpha (hupA), found in Burkholderia pseudomallei (strain K96243).